The chain runs to 374 residues: Isopentenyl-diphosphate delta-isomerase (374 aa).

13–14 (RK) lines the substrate pocket. Residues 71–73 (GMT), Ser-104, and Asn-132 each bind FMN. A substrate-binding site is contributed by 104 to 106 (SQR). Substrate is bound at residue Gln-171. Position 172 (Glu-172) interacts with Mg(2+). FMN is bound by residues Lys-203, Thr-233, 282–284 (GMR), and 303–304 (AL).

The protein belongs to the IPP isomerase type 2 family. Homooctamer. Dimer of tetramers. FMN is required as a cofactor. It depends on NADPH as a cofactor. The cofactor is Mg(2+).

It localises to the cytoplasm. The enzyme catalyses isopentenyl diphosphate = dimethylallyl diphosphate. Functionally, involved in the biosynthesis of isoprenoids. Catalyzes the 1,3-allylic rearrangement of the homoallylic substrate isopentenyl (IPP) to its allylic isomer, dimethylallyl diphosphate (DMAPP). The protein is Isopentenyl-diphosphate delta-isomerase of Thermococcus kodakarensis (strain ATCC BAA-918 / JCM 12380 / KOD1) (Pyrococcus kodakaraensis (strain KOD1)).